A 76-amino-acid chain; its full sequence is UPF0291 protein Aflv_1503 (76 aa).

The segment at 56–76 is disordered; that stretch reads DPNGNDVTPQKLKDSKKKRLH.

Belongs to the UPF0291 family.

Its subcellular location is the cytoplasm. The protein is UPF0291 protein Aflv_1503 of Anoxybacillus flavithermus (strain DSM 21510 / WK1).